A 418-amino-acid polypeptide reads, in one-letter code: (+)-T-muurolol synthase ((2E,6E)-farnesyl diphosphate cyclizing) (418 aa).

Mg(2+)-binding residues include aspartate 83 and aspartate 88. Positions 83-88 (DDEYCD) match the DDXXXD motif motif. Arginine 179 provides a ligand contact to substrate. Residues asparagine 225 and serine 229 each contribute to the Mg(2+) site. Residue lysine 232 participates in substrate binding. A Mg(2+)-binding site is contributed by glutamate 233. 312 to 313 (RY) is a binding site for substrate. Residues 354 to 418 (LPEPGSDGAD…QQSTWRREHR (65 aa)) form a disordered region. Positions 402–412 (ASRSSGLQQST) are enriched in polar residues.

Belongs to the terpene synthase family. It depends on Mg(2+) as a cofactor.

It carries out the reaction (2E,6E)-farnesyl diphosphate + H2O = (+)-T-muurolol + diphosphate. Its pathway is secondary metabolite biosynthesis; terpenoid biosynthesis. Its function is as follows. Catalyzes the conversion of (2E,6E)-farnesyl diphosphate (FPP) into (+)-T-muurolol via a 1,10-cyclization, which requires isomerization of FPP to nerolidyl diphosphate (NPP) and then abstraction of the pyrophosphate from intermediate NPP leading to a (E,Z)-germacradienyl (helminthogermacradienyl) cation. This chain is (+)-T-muurolol synthase ((2E,6E)-farnesyl diphosphate cyclizing), found in Streptomyces clavuligerus.